We begin with the raw amino-acid sequence, 502 residues long: MSQEKYIMAIDQGTTSSRAIIFNKKGEKVSSSQKEFTQIFPQAGWVEHNANEIWNSVQSVIAGAFIESGVKPNQIEAIGITNQRETTVVWDKKTGLPIYNAIVWQSRQTAPLAEQLKSQGYVEKFHEKTGLIIDAYFSATKVRWILDHVEDAQERAEKGELLFGTIDTWLVWKLTDGAAHVTDYSNAARTMLYNIKELKWDDEILEILNIPKAILPEVRSNSEIYGKTAPFHFYGGEVPISGMAGDQQAALFGQLAFEPGMVKNTYGTGSFIIMNTGEEMQLSENNLLTTIGYGINGKVYYALEGSIFIAGSAIQWLRDGLRMVENSPESEKYARDSHNNDEVYVVPAFTGLGAPYWNQNARGSVFGLTRGTSKEDFIKATLQSIAYQVRDIIDTMQVDTQTAIQVLKVDGGAAMNNFLMQFQADILGIDIARAKNLETTALGAAFLAGLSVGYWKDLDELKLLNETGELFEPSMNESRKEQLYKGWKKAVKATQVFAEVDD.

Thr-14 serves as a coordination point for ADP. Residues Thr-14, Thr-15, and Ser-16 each contribute to the ATP site. Thr-14 is a binding site for sn-glycerol 3-phosphate. Arg-18 provides a ligand contact to ADP. Residues Arg-84, Glu-85, and Tyr-136 each contribute to the sn-glycerol 3-phosphate site. Glycerol contacts are provided by Arg-84, Glu-85, and Tyr-136. His-232 carries the phosphohistidine; by HPr modification. Residue Asp-246 participates in sn-glycerol 3-phosphate binding. Glycerol-binding residues include Asp-246 and Gln-247. Residues Thr-268 and Gly-311 each contribute to the ADP site. ATP is bound by residues Thr-268, Gly-311, Gln-315, and Gly-412. 2 residues coordinate ADP: Gly-412 and Asn-416.

It belongs to the FGGY kinase family. In terms of assembly, homotetramer and homodimer (in equilibrium). The phosphoenolpyruvate-dependent sugar phosphotransferase system (PTS), including enzyme I, and histidine-containing protein (HPr) are required for the phosphorylation, which leads to the activation of the enzyme.

The enzyme catalyses glycerol + ATP = sn-glycerol 3-phosphate + ADP + H(+). The protein operates within polyol metabolism; glycerol degradation via glycerol kinase pathway; sn-glycerol 3-phosphate from glycerol: step 1/1. With respect to regulation, activated by phosphorylation and inhibited by fructose 1,6-bisphosphate (FBP). In terms of biological role, key enzyme in the regulation of glycerol uptake and metabolism. Catalyzes the phosphorylation of glycerol to yield sn-glycerol 3-phosphate. The polypeptide is Glycerol kinase (Streptococcus pneumoniae serotype 19F (strain G54)).